Here is a 127-residue protein sequence, read N- to C-terminus: uncharacterized protein (127 aa).

A coiled-coil region spans residues 71–126; the sequence is FYLREYRRIRRRIKELKNRAKYISKGEIAYNPKIMKEVEALKEKLSEIEKKIEELK.

This is an uncharacterized protein from Aquifex aeolicus (strain VF5).